Consider the following 1405-residue polypeptide: DNA-directed RNA polymerase subunit beta' (1405 aa).

Zn(2+) contacts are provided by Cys-71, Cys-73, Cys-86, and Cys-89. Mg(2+) is bound by residues Asp-462, Asp-464, and Asp-466. The Zn(2+) site is built by Cys-810, Cys-884, Cys-891, and Cys-894.

This sequence belongs to the RNA polymerase beta' chain family. The RNAP catalytic core consists of 2 alpha, 1 beta, 1 beta' and 1 omega subunit. When a sigma factor is associated with the core the holoenzyme is formed, which can initiate transcription. Requires Mg(2+) as cofactor. It depends on Zn(2+) as a cofactor.

The enzyme catalyses RNA(n) + a ribonucleoside 5'-triphosphate = RNA(n+1) + diphosphate. In terms of biological role, DNA-dependent RNA polymerase catalyzes the transcription of DNA into RNA using the four ribonucleoside triphosphates as substrates. This is DNA-directed RNA polymerase subunit beta' from Maricaulis maris (strain MCS10) (Caulobacter maris).